A 692-amino-acid polypeptide reads, in one-letter code: DNA ligase (692 aa).

NAD(+)-binding positions include 35-39, 88-89, and Glu117; these read DLVYD and SL. The N6-AMP-lysine intermediate role is filled by Lys119. The NAD(+) site is built by Arg140, Glu176, Lys301, and Lys325. The Zn(2+) site is built by Cys416, Cys419, Cys434, and Cys439. The 82-residue stretch at 611–692 folds into the BRCT domain; sequence LTNQSNSWAS…FDLIKNSKKT (82 aa).

Belongs to the NAD-dependent DNA ligase family. LigA subfamily. Mg(2+) is required as a cofactor. Mn(2+) serves as cofactor.

It catalyses the reaction NAD(+) + (deoxyribonucleotide)n-3'-hydroxyl + 5'-phospho-(deoxyribonucleotide)m = (deoxyribonucleotide)n+m + AMP + beta-nicotinamide D-nucleotide.. DNA ligase that catalyzes the formation of phosphodiester linkages between 5'-phosphoryl and 3'-hydroxyl groups in double-stranded DNA using NAD as a coenzyme and as the energy source for the reaction. It is essential for DNA replication and repair of damaged DNA. This chain is DNA ligase, found in Mesomycoplasma hyopneumoniae (strain 232) (Mycoplasma hyopneumoniae).